The following is a 198-amino-acid chain: Ribonuclease HII (198 aa).

Residues 3-194 form the RNase H type-2 domain; that stretch reads RRVCGVDEAG…VKRCLALGQQ (192 aa). Residues Asp-9, Glu-10, and Asp-101 each contribute to the a divalent metal cation site.

Belongs to the RNase HII family. The cofactor is Mn(2+). Mg(2+) is required as a cofactor.

The protein resides in the cytoplasm. The catalysed reaction is Endonucleolytic cleavage to 5'-phosphomonoester.. In terms of biological role, endonuclease that specifically degrades the RNA of RNA-DNA hybrids. In Laribacter hongkongensis (strain HLHK9), this protein is Ribonuclease HII.